A 240-amino-acid polypeptide reads, in one-letter code: tRNA (guanine-N(7)-)-methyltransferase (240 aa).

Residues 1–20 (MTESHDTPITPDGEARPHRR) form a disordered region. Residues E70, E95, D122, and D145 each coordinate S-adenosyl-L-methionine. The active site involves D145. Substrate is bound by residues K149, D181, and 218–221 (TKFE).

The protein belongs to the class I-like SAM-binding methyltransferase superfamily. TrmB family.

The catalysed reaction is guanosine(46) in tRNA + S-adenosyl-L-methionine = N(7)-methylguanosine(46) in tRNA + S-adenosyl-L-homocysteine. It functions in the pathway tRNA modification; N(7)-methylguanine-tRNA biosynthesis. In terms of biological role, catalyzes the formation of N(7)-methylguanine at position 46 (m7G46) in tRNA. This is tRNA (guanine-N(7)-)-methyltransferase from Pseudomonas putida (strain ATCC 47054 / DSM 6125 / CFBP 8728 / NCIMB 11950 / KT2440).